The following is an 80-amino-acid chain: Acyl carrier protein (80 aa).

Positions glutamate 4 to glutamine 79 constitute a Carrier domain. Serine 39 is subject to O-(pantetheine 4'-phosphoryl)serine.

It belongs to the acyl carrier protein (ACP) family. In terms of processing, 4'-phosphopantetheine is transferred from CoA to a specific serine of apo-ACP by AcpS. This modification is essential for activity because fatty acids are bound in thioester linkage to the sulfhydryl of the prosthetic group.

The protein resides in the cytoplasm. The protein operates within lipid metabolism; fatty acid biosynthesis. Its function is as follows. Carrier of the growing fatty acid chain in fatty acid biosynthesis. This chain is Acyl carrier protein, found in Prochlorococcus marinus (strain SARG / CCMP1375 / SS120).